The chain runs to 85 residues: Toxin BmKT (85 aa).

Residues 1-19 form the signal peptide; the sequence is MNYLVFFSLALLLMTGVES. The LCN-type CS-alpha/beta domain maps to 21-83; it reads RDGYIADDKN…VPIRVPGKCN (63 aa). Intrachain disulfides connect cysteine 31–cysteine 82, cysteine 35–cysteine 55, cysteine 41–cysteine 65, and cysteine 45–cysteine 67.

The protein belongs to the long (4 C-C) scorpion toxin superfamily. Sodium channel inhibitor family. Alpha subfamily. In terms of tissue distribution, expressed by the venom gland.

Its subcellular location is the secreted. Functionally, binds to sodium channels (Nav) and inhibits the inactivation of the activated channels, thereby blocking neuronal transmission. Tested on mice, has antitumor effect and strong inhibitory effect on pain. The chain is Toxin BmKT from Olivierus martensii (Manchurian scorpion).